The sequence spans 837 residues: Protein translocase subunit SecA (837 aa).

ATP contacts are provided by residues Q85, G103–T107, and D493. Zn(2+) is bound by residues C821, C823, C832, and H833.

It belongs to the SecA family. In terms of assembly, monomer and homodimer. Part of the essential Sec protein translocation apparatus which comprises SecA, SecYEG and auxiliary proteins SecDF. Other proteins may also be involved. Zn(2+) serves as cofactor.

It localises to the cell membrane. Its subcellular location is the cytoplasm. The enzyme catalyses ATP + H2O + cellular proteinSide 1 = ADP + phosphate + cellular proteinSide 2.. In terms of biological role, part of the Sec protein translocase complex. Interacts with the SecYEG preprotein conducting channel. Has a central role in coupling the hydrolysis of ATP to the transfer of proteins into and across the cell membrane, serving as an ATP-driven molecular motor driving the stepwise translocation of polypeptide chains across the membrane. In Streptococcus pneumoniae (strain P1031), this protein is Protein translocase subunit SecA.